Consider the following 555-residue polypeptide: 2-succinyl-5-enolpyruvyl-6-hydroxy-3-cyclohexene-1-carboxylate synthase (555 aa).

This sequence belongs to the TPP enzyme family. MenD subfamily. Homodimer. The cofactor is Mg(2+). Requires Mn(2+) as cofactor. It depends on thiamine diphosphate as a cofactor.

It carries out the reaction isochorismate + 2-oxoglutarate + H(+) = 5-enolpyruvoyl-6-hydroxy-2-succinyl-cyclohex-3-ene-1-carboxylate + CO2. The protein operates within quinol/quinone metabolism; 1,4-dihydroxy-2-naphthoate biosynthesis; 1,4-dihydroxy-2-naphthoate from chorismate: step 2/7. It functions in the pathway quinol/quinone metabolism; menaquinone biosynthesis. Functionally, catalyzes the thiamine diphosphate-dependent decarboxylation of 2-oxoglutarate and the subsequent addition of the resulting succinic semialdehyde-thiamine pyrophosphate anion to isochorismate to yield 2-succinyl-5-enolpyruvyl-6-hydroxy-3-cyclohexene-1-carboxylate (SEPHCHC). This Bacteroides thetaiotaomicron (strain ATCC 29148 / DSM 2079 / JCM 5827 / CCUG 10774 / NCTC 10582 / VPI-5482 / E50) protein is 2-succinyl-5-enolpyruvyl-6-hydroxy-3-cyclohexene-1-carboxylate synthase.